The sequence spans 211 residues: FMN-dependent NADH:quinone oxidoreductase (211 aa).

Residues Ser-10, 16-18 (STS), and 138-141 (TQGG) each bind FMN.

The protein belongs to the azoreductase type 1 family. Homodimer. FMN is required as a cofactor.

The enzyme catalyses 2 a quinone + NADH + H(+) = 2 a 1,4-benzosemiquinone + NAD(+). It carries out the reaction N,N-dimethyl-1,4-phenylenediamine + anthranilate + 2 NAD(+) = 2-(4-dimethylaminophenyl)diazenylbenzoate + 2 NADH + 2 H(+). Its function is as follows. Quinone reductase that provides resistance to thiol-specific stress caused by electrophilic quinones. Functionally, also exhibits azoreductase activity. Catalyzes the reductive cleavage of the azo bond in aromatic azo compounds to the corresponding amines. The protein is FMN-dependent NADH:quinone oxidoreductase of Frankia alni (strain DSM 45986 / CECT 9034 / ACN14a).